We begin with the raw amino-acid sequence, 443 residues long: Glutamyl-tRNA reductase (443 aa).

Substrate is bound by residues 49 to 52 (TCNR), S109, 114 to 116 (ETQ), and Q120. C50 serves as the catalytic Nucleophile. 189 to 194 (GAGKMG) lines the NADP(+) pocket.

This sequence belongs to the glutamyl-tRNA reductase family. In terms of assembly, homodimer.

The catalysed reaction is (S)-4-amino-5-oxopentanoate + tRNA(Glu) + NADP(+) = L-glutamyl-tRNA(Glu) + NADPH + H(+). The protein operates within porphyrin-containing compound metabolism; protoporphyrin-IX biosynthesis; 5-aminolevulinate from L-glutamyl-tRNA(Glu): step 1/2. In terms of biological role, catalyzes the NADPH-dependent reduction of glutamyl-tRNA(Glu) to glutamate 1-semialdehyde (GSA). This Bacillus mycoides (strain KBAB4) (Bacillus weihenstephanensis) protein is Glutamyl-tRNA reductase.